Here is a 160-residue protein sequence, read N- to C-terminus: Cytochrome b6-f complex subunit 4 (160 aa).

The next 3 membrane-spanning stretches (helical) occupy residues Leu-36–Val-56, Leu-95–Glu-115, and Thr-131–Ile-151.

The protein belongs to the cytochrome b family. PetD subfamily. In terms of assembly, the 4 large subunits of the cytochrome b6-f complex are cytochrome b6, subunit IV (17 kDa polypeptide, petD), cytochrome f and the Rieske protein, while the 4 small subunits are petG, petL, petM and petN. The complex functions as a dimer.

The protein localises to the plastid. The protein resides in the chloroplast thylakoid membrane. Component of the cytochrome b6-f complex, which mediates electron transfer between photosystem II (PSII) and photosystem I (PSI), cyclic electron flow around PSI, and state transitions. The polypeptide is Cytochrome b6-f complex subunit 4 (Saccharum hybrid (Sugarcane)).